A 584-amino-acid chain; its full sequence is Myo-inositol transporter 1 (584 aa).

Topologically, residues 1–81 are cytoplasmic; it reads MGIHIPYLTS…TSVMITFNQS (81 aa). The residue at position 12 (threonine 12) is a Phosphothreonine. The tract at residues 13 to 42 is disordered; that stretch reads SQSNVGDAVGNADSVEFNSEHDSPSKRGKI. Serine 26, serine 31, serine 35, serine 37, and serine 46 each carry phosphoserine. The segment covering 30–42 has biased composition (basic and acidic residues); it reads NSEHDSPSKRGKI. The chain crosses the membrane as a helical span at residues 82–102; the sequence is LSPFIITLTFVASISGFMFGY. The Extracellular segment spans residues 103–129; sequence DTGYISSALISIGTDLDHKVLTYGEKE. The chain crosses the membrane as a helical span at residues 130–150; it reads IVTAATSLGALITSIFAGTAA. The Cytoplasmic portion of the chain corresponds to 151-163; it reads DIFGRKRCLMGSN. The helical transmembrane segment at 164-184 threads the bilayer; sequence LMFVIGAILQVSAHTFWQMAV. Residues 185–186 are Extracellular-facing; it reads GR. The chain crosses the membrane as a helical span at residues 187 to 207; sequence LIMGFGVGIGSLIAPLFISEI. The Cytoplasmic segment spans residues 208 to 215; it reads APKMIRGR. Residues 216–236 traverse the membrane as a helical segment; sequence LTVINSLWLTGGQLVAYGCGA. Topologically, residues 237–246 are extracellular; it reads GLNYVNNGWR. Residues 247–267 traverse the membrane as a helical segment; sequence ILVGLSLIPTAVQFTCLCFLP. Residues 268–349 lie on the Cytoplasmic side of the membrane; sequence DTPRYYVMKG…IGCGLQAIQQ (82 aa). A helical membrane pass occupies residues 350-370; it reads FTGWNSLMYFSGTIFETVGFK. N-linked (GlcNAc...) asparagine glycosylation is present at asparagine 371. The Extracellular segment spans residues 371–376; that stretch reads NSSAVS. The chain crosses the membrane as a helical span at residues 377–397; the sequence is IIVSGTNFIFTLVAFFSIDKI. Residues 398–400 lie on the Cytoplasmic side of the membrane; sequence GRR. The helical transmembrane segment at 401–421 threads the bilayer; sequence TILLIGLPGMTMALVVCSIAF. Residues 422–441 lie on the Extracellular side of the membrane; sequence HFLGIKFDGAVAVVVSSGFS. The helical transmembrane segment at 442-462 threads the bilayer; the sequence is SWGIVIIVFIIVFAAFYALGI. The Cytoplasmic segment spans residues 463–486; it reads GTVPWQQSELFPQNVRGIGTSYAT. The chain crosses the membrane as a helical span at residues 487-507; that stretch reads ATNWAGSLVIASTFLTMLQNI. Topologically, residues 508 to 510 are extracellular; it reads TPA. Residues 511–531 traverse the membrane as a helical segment; sequence GTFAFFAGLSCLSTIFCYFCY. Topologically, residues 532-584 are cytoplasmic; sequence PELSGLELEEVQTILKDGFNIKASKALAKKRKQQVARVHELKYEPTQEIIEDI. Lysine 573 is covalently cross-linked (Glycyl lysine isopeptide (Lys-Gly) (interchain with G-Cter in ubiquitin)).

This sequence belongs to the major facilitator superfamily. Sugar transporter (TC 2.A.1.1) family.

The protein localises to the cell membrane. It carries out the reaction myo-inositol(out) + H(+)(out) = myo-inositol(in) + H(+)(in). Functionally, major transporter for myo-inositol. This Saccharomyces cerevisiae (strain ATCC 204508 / S288c) (Baker's yeast) protein is Myo-inositol transporter 1 (ITR1).